The chain runs to 225 residues: Chlorosome protein J (225 aa).

The 2Fe-2S ferredoxin-type domain occupies 1–95 (MIIYINDKPC…TIRVLTRAEK (95 aa)). [2Fe-2S] cluster contacts are provided by cysteine 33, cysteine 39, cysteine 42, and cysteine 77.

It depends on [2Fe-2S] cluster as a cofactor.

Its subcellular location is the chlorosome. Its function is as follows. Could play a direct role in the oxidation or reduction of the quenching species formed in the chlorosome. The polypeptide is Chlorosome protein J (csmJ) (Chlorobaculum tepidum (strain ATCC 49652 / DSM 12025 / NBRC 103806 / TLS) (Chlorobium tepidum)).